We begin with the raw amino-acid sequence, 476 residues long: Aspartyl/glutamyl-tRNA(Asn/Gln) amidotransferase subunit B (476 aa).

This sequence belongs to the GatB/GatE family. GatB subfamily. Heterotrimer of A, B and C subunits.

It carries out the reaction L-glutamyl-tRNA(Gln) + L-glutamine + ATP + H2O = L-glutaminyl-tRNA(Gln) + L-glutamate + ADP + phosphate + H(+). It catalyses the reaction L-aspartyl-tRNA(Asn) + L-glutamine + ATP + H2O = L-asparaginyl-tRNA(Asn) + L-glutamate + ADP + phosphate + 2 H(+). Allows the formation of correctly charged Asn-tRNA(Asn) or Gln-tRNA(Gln) through the transamidation of misacylated Asp-tRNA(Asn) or Glu-tRNA(Gln) in organisms which lack either or both of asparaginyl-tRNA or glutaminyl-tRNA synthetases. The reaction takes place in the presence of glutamine and ATP through an activated phospho-Asp-tRNA(Asn) or phospho-Glu-tRNA(Gln). In Bacillus cytotoxicus (strain DSM 22905 / CIP 110041 / 391-98 / NVH 391-98), this protein is Aspartyl/glutamyl-tRNA(Asn/Gln) amidotransferase subunit B.